Reading from the N-terminus, the 376-residue chain is Glucose-1-phosphate adenylyltransferase (376 aa).

Residues Tyr101, Gly166, 181-182 (EK), and Ser192 contribute to the alpha-D-glucose 1-phosphate site.

This sequence belongs to the bacterial/plant glucose-1-phosphate adenylyltransferase family. Homotetramer.

It carries out the reaction alpha-D-glucose 1-phosphate + ATP + H(+) = ADP-alpha-D-glucose + diphosphate. The protein operates within glycan biosynthesis; glycogen biosynthesis. In terms of biological role, involved in the biosynthesis of ADP-glucose, a building block required for the elongation reactions to produce glycogen. Catalyzes the reaction between ATP and alpha-D-glucose 1-phosphate (G1P) to produce pyrophosphate and ADP-Glc. The sequence is that of Glucose-1-phosphate adenylyltransferase from Bacillus mycoides (strain KBAB4) (Bacillus weihenstephanensis).